We begin with the raw amino-acid sequence, 92 residues long: uncharacterized protein (92 aa).

This is an uncharacterized protein from Dictyostelium discoideum (Social amoeba).